Reading from the N-terminus, the 393-residue chain is Putative zinc metalloprotease Rip3 (393 aa).

The next 2 helical transmembrane spans lie at 10 to 30 (IAGFVVNVHWSVLVILWLFTW) and 45 to 65 (AVVYWLLGAGGAVMLLASLLA). Zn(2+) is bound at residue histidine 66. Glutamate 67 is a catalytic residue. A Zn(2+)-binding site is contributed by histidine 70. 4 helical membrane-spanning segments follow: residues 77–97 (AGVSVESVTLWLFGGVTALGG), 108–128 (IAFAGPATSLALSATFGALAI), 136–156 (PAIVISVAWWLATVNLLLGLF), and 207–227 (FVAGGLVGGVWLAFIGWFIFA). CBS domains are found at residues 251–308 (MTAQ…RRST) and 315–376 (ALPL…AQPE).

The protein belongs to the peptidase M50B family. Zn(2+) is required as a cofactor.

It is found in the cell membrane. This chain is Putative zinc metalloprotease Rip3 (rip3), found in Mycobacterium tuberculosis (strain ATCC 35801 / TMC 107 / Erdman).